Here is a 237-residue protein sequence, read N- to C-terminus: NAD(P)H-quinone oxidoreductase subunit K (237 aa).

The [4Fe-4S] cluster site is built by cysteine 52, cysteine 53, cysteine 117, and cysteine 148.

It belongs to the complex I 20 kDa subunit family. In terms of assembly, NDH-1 can be composed of about 15 different subunits; different subcomplexes with different compositions have been identified which probably have different functions. [4Fe-4S] cluster serves as cofactor.

The protein localises to the cellular thylakoid membrane. The catalysed reaction is a plastoquinone + NADH + (n+1) H(+)(in) = a plastoquinol + NAD(+) + n H(+)(out). It catalyses the reaction a plastoquinone + NADPH + (n+1) H(+)(in) = a plastoquinol + NADP(+) + n H(+)(out). Functionally, NDH-1 shuttles electrons from an unknown electron donor, via FMN and iron-sulfur (Fe-S) centers, to quinones in the respiratory and/or the photosynthetic chain. The immediate electron acceptor for the enzyme in this species is believed to be plastoquinone. Couples the redox reaction to proton translocation, and thus conserves the redox energy in a proton gradient. Cyanobacterial NDH-1 also plays a role in inorganic carbon-concentration. This chain is NAD(P)H-quinone oxidoreductase subunit K, found in Thermosynechococcus vestitus (strain NIES-2133 / IAM M-273 / BP-1).